The sequence spans 43 residues: MQTATVLSIFISSLLLGITIYSIYISFGPISRELRDPFEEHEE.

A helical transmembrane segment spans residues threonine 5 to isoleucine 25.

This sequence belongs to the PsbN family.

It is found in the plastid. Its subcellular location is the chloroplast thylakoid membrane. Its function is as follows. May play a role in photosystem I and II biogenesis. This chain is Protein PsbN, found in Gracilaria tenuistipitata var. liui (Red alga).